We begin with the raw amino-acid sequence, 442 residues long: ORC1-type DNA replication protein 8 (442 aa).

ATP is bound by residues 66 to 70 (VGKTA) and Y218.

This sequence belongs to the CDC6/cdc18 family.

In terms of biological role, involved in regulation of DNA replication. This Haloarcula marismortui (strain ATCC 43049 / DSM 3752 / JCM 8966 / VKM B-1809) (Halobacterium marismortui) protein is ORC1-type DNA replication protein 8 (cdc6h).